The sequence spans 272 residues: MNMQLGSPVSVHPIPIYQGNYVWVMRHTSQNSVVVVDPGSASEVIEYITQHELTIASIIITHSHWDHVTGIAELCANLQLWRDEEPVVYGPSVIQDVTHPVEDGDRIELCKGVDVPSLQVIATPGHMPEHLSYLLPLTTPKLFCGDTLFSCGCGRILQGTHEQLRTSLDAISALPSQTEVYCTHEYTLTNIKFARTVEPQSQALIDYEQRVRSLRKNDLPSIPTTIEREKALNPFLRYKELSIQQAVENHLRLKGLTAADVFKHLRLWKDSF.

Residues His-62, His-64, Asp-66, His-67, His-126, Asp-146, and His-184 each contribute to the Zn(2+) site.

It belongs to the metallo-beta-lactamase superfamily. Glyoxalase II family. As to quaternary structure, monomer. Requires Zn(2+) as cofactor.

It carries out the reaction an S-(2-hydroxyacyl)glutathione + H2O = a 2-hydroxy carboxylate + glutathione + H(+). The protein operates within secondary metabolite metabolism; methylglyoxal degradation; (R)-lactate from methylglyoxal: step 2/2. Its function is as follows. Thiolesterase that catalyzes the hydrolysis of S-D-lactoyl-glutathione to form glutathione and D-lactic acid. The sequence is that of Hydroxyacylglutathione hydrolase from Saccharophagus degradans (strain 2-40 / ATCC 43961 / DSM 17024).